A 260-amino-acid polypeptide reads, in one-letter code: 3'-5' ssDNA/RNA exonuclease TatD (260 aa).

Glu-91, His-127, and His-152 together coordinate a divalent metal cation.

Belongs to the metallo-dependent hydrolases superfamily. TatD-type hydrolase family. TatD subfamily. Monomer. It depends on Mg(2+) as a cofactor.

It localises to the cytoplasm. Functionally, 3'-5' exonuclease that prefers single-stranded DNA and RNA. May play a role in the H(2)O(2)-induced DNA damage repair. In Shigella flexneri serotype 5b (strain 8401), this protein is 3'-5' ssDNA/RNA exonuclease TatD.